The sequence spans 90 residues: Small ribosomal subunit protein bS6 (90 aa).

An Isoglutamyl lysine isopeptide (Lys-Gln) (interchain with Q-Cter in protein Pup) cross-link involves residue lysine 33.

It belongs to the bacterial ribosomal protein bS6 family.

In terms of biological role, binds together with bS18 to 16S ribosomal RNA. This Mycolicibacterium smegmatis (strain ATCC 700084 / mc(2)155) (Mycobacterium smegmatis) protein is Small ribosomal subunit protein bS6 (rpsF).